The chain runs to 1368 residues: DNA-directed RNA polymerase subunit beta (1368 aa).

It belongs to the RNA polymerase beta chain family. In terms of assembly, the RNAP catalytic core consists of 2 alpha, 1 beta, 1 beta' and 1 omega subunit. When a sigma factor is associated with the core the holoenzyme is formed, which can initiate transcription.

It catalyses the reaction RNA(n) + a ribonucleoside 5'-triphosphate = RNA(n+1) + diphosphate. Functionally, DNA-dependent RNA polymerase catalyzes the transcription of DNA into RNA using the four ribonucleoside triphosphates as substrates. The sequence is that of DNA-directed RNA polymerase subunit beta from Burkholderia thailandensis (strain ATCC 700388 / DSM 13276 / CCUG 48851 / CIP 106301 / E264).